We begin with the raw amino-acid sequence, 98 residues long: NADH-ubiquinone oxidoreductase chain 4L (98 aa).

3 helical membrane passes run 1–21, 29–49, and 61–81; these read MSMV…GLLV, SLLC…ITIL, and IILL…LVMV.

It belongs to the complex I subunit 4L family. In terms of assembly, core subunit of respiratory chain NADH dehydrogenase (Complex I) which is composed of 45 different subunits.

It localises to the mitochondrion inner membrane. The enzyme catalyses a ubiquinone + NADH + 5 H(+)(in) = a ubiquinol + NAD(+) + 4 H(+)(out). Functionally, core subunit of the mitochondrial membrane respiratory chain NADH dehydrogenase (Complex I) which catalyzes electron transfer from NADH through the respiratory chain, using ubiquinone as an electron acceptor. Part of the enzyme membrane arm which is embedded in the lipid bilayer and involved in proton translocation. This Mephitis mephitis (Striped skunk) protein is NADH-ubiquinone oxidoreductase chain 4L (MT-ND4L).